We begin with the raw amino-acid sequence, 272 residues long: Cyanophycinase (272 aa).

Catalysis depends on charge relay system residues Ser-132, Glu-150, and His-174.

The protein belongs to the peptidase S51 family.

The enzyme catalyses [L-4-(L-arginin-2-N-yl)aspartate](n) + H2O = [L-4-(L-arginin-2-N-yl)aspartate](n-1) + L-4-(L-arginin-2-N-yl)aspartate. Functionally, exopeptidase that catalyzes the hydrolytic cleavage of multi-L-arginyl-poly-L-aspartic acid (cyanophycin; a water-insoluble reserve polymer) into aspartate-arginine dipeptides. The chain is Cyanophycinase (cphB) from Geminocystis herdmanii (strain PCC 6308) (Synechocystis sp. (strain PCC 6308)).